The sequence spans 398 residues: MADYWKSQPKKFCDYCKCWIADNRPSIDFHERGKNHKENVAKRISEIRKKSMEKAKEEENMSKEFAAMEEAAMKAYQEDLKRLGIKPDDVGPSSTLNKTQSITAEGKEKKEKKEKKEKKEKKKKTREGTSESPKTEPKEWVQGLSPEGYTYYYNTKTGESQWEKPKGFQGNSKTSHTGSVWVEGVSEDGHTYYYNTQTGVSTWEKPDGFVSSSNDNSQRGKHSEEADSRASESDSEQEDSESEGQSPGTNLKRKGENDEESEKEKSPKAKKLSPYGKWREVKWQEVKWQEEAVDKEKIALASKEASSDESKTDTYGKWKAIKNEEEEEPDEKVDLELPSTEGDSALPPVLDVPEDATVIFKEKTVTSLGDLTEGVPTFKKREFENGKSRNLRQRLDDQ.

Residues 11–42 (KFCDYCKCWIADNRPSIDFHERGKNHKENVAK) form a Matrin-type zinc finger. Disordered stretches follow at residues 84-182 (GIKP…SVWV), 200-274 (VSTW…KLSP), 300-350 (LASK…PPVL), and 379-398 (KKRE…LDDQ). Polar residues predominate over residues 92 to 103 (PSSTLNKTQSIT). The span at 112–125 (KKEKKEKKEKKKKT) shows a compositional bias: basic residues. The segment covering 126-139 (REGTSESPKTEPKE) has biased composition (basic and acidic residues). 2 WW domains span residues 134–167 (KTEP…KPKG) and 175–208 (SHTG…KPDG). The segment covering 169-178 (QGNSKTSHTG) has biased composition (polar residues). Residues 221-232 (KHSEEADSRASE) are compositionally biased toward basic and acidic residues. Over residues 233–242 (SDSEQEDSES) the composition is skewed to acidic residues. Over residues 305 to 316 (ASSDESKTDTYG) the composition is skewed to basic and acidic residues. The segment covering 324 to 333 (EEEEEPDEKV) has biased composition (acidic residues).

As to quaternary structure, component of the spliceosome B complex. Associated with U2 snRNPs. Binds splicing factors SNRPB, SNRPC and SF1.

The protein localises to the nucleus. It localises to the nucleus speckle. Functionally, involved in pre-mRNA splicing as a component of the spliceosome. May play a role in cross-intron bridging of U1 and U2 snRNPs in the mammalian A complex. The sequence is that of WW domain-binding protein 4 (WBP4) from Gallus gallus (Chicken).